Here is a 492-residue protein sequence, read N- to C-terminus: 3-octaprenyl-4-hydroxybenzoate carboxy-lyase (492 aa).

Position 175 (N175) interacts with Mn(2+). Prenylated FMN-binding positions include 178–180, 192–194, and 197–198; these read IYR, RWL, and RG. E241 contributes to the Mn(2+) binding site. The Proton donor role is filled by D290.

The protein belongs to the UbiD family. As to quaternary structure, homohexamer. Prenylated FMN is required as a cofactor. Mn(2+) serves as cofactor.

The protein localises to the cell membrane. The catalysed reaction is a 4-hydroxy-3-(all-trans-polyprenyl)benzoate + H(+) = a 2-(all-trans-polyprenyl)phenol + CO2. The protein operates within cofactor biosynthesis; ubiquinone biosynthesis. Functionally, catalyzes the decarboxylation of 3-octaprenyl-4-hydroxy benzoate to 2-octaprenylphenol, an intermediate step in ubiquinone biosynthesis. The protein is 3-octaprenyl-4-hydroxybenzoate carboxy-lyase of Salmonella typhimurium (strain LT2 / SGSC1412 / ATCC 700720).